The primary structure comprises 274 residues: NADPH-dependent 7-cyano-7-deazaguanine reductase (274 aa).

80 to 82 lines the substrate pocket; that stretch reads VES. NADPH is bound at residue 82-83; the sequence is SK. Cys-181 (thioimide intermediate) is an active-site residue. Asp-188 serves as the catalytic Proton donor. 220–221 serves as a coordination point for substrate; that stretch reads HE. 249 to 250 contacts NADPH; the sequence is RG.

It belongs to the GTP cyclohydrolase I family. QueF type 2 subfamily. In terms of assembly, homodimer.

Its subcellular location is the cytoplasm. The catalysed reaction is 7-aminomethyl-7-carbaguanine + 2 NADP(+) = 7-cyano-7-deazaguanine + 2 NADPH + 3 H(+). It functions in the pathway tRNA modification; tRNA-queuosine biosynthesis. Catalyzes the NADPH-dependent reduction of 7-cyano-7-deazaguanine (preQ0) to 7-aminomethyl-7-deazaguanine (preQ1). The chain is NADPH-dependent 7-cyano-7-deazaguanine reductase from Burkholderia thailandensis (strain ATCC 700388 / DSM 13276 / CCUG 48851 / CIP 106301 / E264).